Reading from the N-terminus, the 436-residue chain is 3-ketoacyl-CoA thiolase (436 aa).

Catalysis depends on cysteine 99, which acts as the Acyl-thioester intermediate. Active-site proton acceptor residues include histidine 392 and cysteine 422.

This sequence belongs to the thiolase-like superfamily. Thiolase family. In terms of assembly, heterotetramer of two alpha chains (FadJ) and two beta chains (FadI).

It localises to the cytoplasm. The enzyme catalyses an acyl-CoA + acetyl-CoA = a 3-oxoacyl-CoA + CoA. The protein operates within lipid metabolism; fatty acid beta-oxidation. Functionally, catalyzes the final step of fatty acid oxidation in which acetyl-CoA is released and the CoA ester of a fatty acid two carbons shorter is formed. The protein is 3-ketoacyl-CoA thiolase of Photobacterium profundum (strain SS9).